The chain runs to 197 residues: MKFTSLICSSILLIIPTVMADDASSDTTIINTITITKTLYTPEESSSLLSVQLESEASVASVASAASEAAASAASIASVASEASAASLASELSALAKVTEVKADVINNYNATINSTLSSSTIAPKISSSSSSSSSKKHESITSVITSSTKDNASAAVTTKTGSATSKAGAAAMAGPVPILTNSIFTAGLLALAAVLL.

An N-terminal signal peptide occupies residues 1–20 (MKFTSLICSSILLIIPTVMA). N-linked (GlcNAc...) asparagine glycosylation is found at N110, N114, and N152. The GPI-anchor amidated glycine moiety is linked to residue G169. The propeptide at 170 to 197 (AAAMAGPVPILTNSIFTAGLLALAAVLL) is removed in mature form.

The protein resides in the cell membrane. Functionally, predicted GPI-anchored protein which may have a role during host infection. This Candida albicans (strain SC5314 / ATCC MYA-2876) (Yeast) protein is Predicted GPI-anchored protein 34 (PGA34).